We begin with the raw amino-acid sequence, 25 residues long: Xenoposin precursor fragment BM3 (25 aa).

Expressed by the skin glands.

The protein localises to the secreted. Antimicrobial peptide. The protein is Xenoposin precursor fragment BM3 of Xenopus boumbaensis (Mawa clawed frog).